The chain runs to 194 residues: Holliday junction branch migration complex subunit RuvA (194 aa).

The segment at 1-64 (MIGRLRGILA…EDSVSLYGFL (64 aa)) is domain I. The tract at residues 65 to 140 (REGERRLFRD…RAADFSSGAP (76 aa)) is domain II. The flexible linker stretch occupies residues 140-144 (PITGQ). Residues 145-194 (LGPDAISEATVALQQLGYKPAEAARMARDAGAEGGEVATVIRKALQAALR) form a domain III region.

The protein belongs to the RuvA family. In terms of assembly, homotetramer. Forms an RuvA(8)-RuvB(12)-Holliday junction (HJ) complex. HJ DNA is sandwiched between 2 RuvA tetramers; dsDNA enters through RuvA and exits via RuvB. An RuvB hexamer assembles on each DNA strand where it exits the tetramer. Each RuvB hexamer is contacted by two RuvA subunits (via domain III) on 2 adjacent RuvB subunits; this complex drives branch migration. In the full resolvosome a probable DNA-RuvA(4)-RuvB(12)-RuvC(2) complex forms which resolves the HJ.

It localises to the cytoplasm. The RuvA-RuvB-RuvC complex processes Holliday junction (HJ) DNA during genetic recombination and DNA repair, while the RuvA-RuvB complex plays an important role in the rescue of blocked DNA replication forks via replication fork reversal (RFR). RuvA specifically binds to HJ cruciform DNA, conferring on it an open structure. The RuvB hexamer acts as an ATP-dependent pump, pulling dsDNA into and through the RuvAB complex. HJ branch migration allows RuvC to scan DNA until it finds its consensus sequence, where it cleaves and resolves the cruciform DNA. The chain is Holliday junction branch migration complex subunit RuvA from Xanthomonas oryzae pv. oryzae (strain MAFF 311018).